The sequence spans 337 residues: Alanine racemase (337 aa).

The Proton acceptor; specific for D-alanine role is filled by K33. K33 is modified (N6-(pyridoxal phosphate)lysine). R118 provides a ligand contact to substrate. Residue Y246 is the Proton acceptor; specific for L-alanine of the active site. Position 292 (M292) interacts with substrate.

This sequence belongs to the alanine racemase family. Pyridoxal 5'-phosphate is required as a cofactor.

The catalysed reaction is L-alanine = D-alanine. Its pathway is amino-acid biosynthesis; D-alanine biosynthesis; D-alanine from L-alanine: step 1/1. Functionally, catalyzes the interconversion of L-alanine and D-alanine. May also act on other amino acids. This is Alanine racemase (alr) from Campylobacter curvus (strain 525.92).